The sequence spans 300 residues: Cytochrome f (300 aa).

The first 32 residues, 1 to 32 (MMTYLSKQFSKLLFGQLLFLFIGNLLLKPVQA), serve as a signal peptide directing secretion. Residues Y33, C53, C56, and H57 each contribute to the heme site. The chain crosses the membrane as a helical span at residues 267 to 287 (LKTFIAFCVTVFIGQLAFVLK).

Belongs to the cytochrome f family. As to quaternary structure, the 4 large subunits of the cytochrome b6-f complex are cytochrome b6, subunit IV (17 kDa polypeptide, petD), cytochrome f and the Rieske protein, while the 4 small subunits are PetG, PetL, PetM and PetN. The complex functions as a dimer. Heme serves as cofactor.

It localises to the plastid. The protein resides in the chloroplast thylakoid membrane. In terms of biological role, component of the cytochrome b6-f complex, which mediates electron transfer between photosystem II (PSII) and photosystem I (PSI), cyclic electron flow around PSI, and state transitions. This is Cytochrome f from Cyanidioschyzon merolae (strain NIES-3377 / 10D) (Unicellular red alga).